A 505-amino-acid polypeptide reads, in one-letter code: Glutamate--tRNA ligase (505 aa).

The 'HIGH' region motif lies at 12-22 (PSPTGALHIGG). The short motif at 260 to 264 (KLSKR) is the 'KMSKS' region element. Lys263 contributes to the ATP binding site.

This sequence belongs to the class-I aminoacyl-tRNA synthetase family. Glutamate--tRNA ligase type 1 subfamily. In terms of assembly, monomer.

The protein localises to the cytoplasm. The catalysed reaction is tRNA(Glu) + L-glutamate + ATP = L-glutamyl-tRNA(Glu) + AMP + diphosphate. Its function is as follows. Catalyzes the attachment of glutamate to tRNA(Glu) in a two-step reaction: glutamate is first activated by ATP to form Glu-AMP and then transferred to the acceptor end of tRNA(Glu). The protein is Glutamate--tRNA ligase of Parabacteroides distasonis (strain ATCC 8503 / DSM 20701 / CIP 104284 / JCM 5825 / NCTC 11152).